A 251-amino-acid chain; its full sequence is Small ribosomal subunit protein uS2 (251 aa).

The protein belongs to the universal ribosomal protein uS2 family.

This is Small ribosomal subunit protein uS2 from Nitrosomonas eutropha (strain DSM 101675 / C91 / Nm57).